A 303-amino-acid chain; its full sequence is GMP synthase [glutamine-hydrolyzing] subunit B (303 aa).

The 183-residue stretch at 1 to 183 (MDVEKFVENA…LGLPKEISER (183 aa)) folds into the GMPS ATP-PPase domain. 28–34 (SGGVDSS) contacts ATP.

Heterodimer composed of a glutamine amidotransferase subunit (A) and a GMP-binding subunit (B).

It catalyses the reaction XMP + L-glutamine + ATP + H2O = GMP + L-glutamate + AMP + diphosphate + 2 H(+). Its pathway is purine metabolism; GMP biosynthesis; GMP from XMP (L-Gln route): step 1/1. Catalyzes the synthesis of GMP from XMP. In Archaeoglobus fulgidus (strain ATCC 49558 / DSM 4304 / JCM 9628 / NBRC 100126 / VC-16), this protein is GMP synthase [glutamine-hydrolyzing] subunit B (guaAB).